The chain runs to 639 residues: Chaperone protein DnaK (639 aa).

Thr198 carries the phosphothreonine; by autocatalysis modification. The tract at residues 602–639 is disordered; the sequence is QAKSQAQGGDNADAGKQANATADDVVDAEFEEVKDDKK. Positions 625 to 639 are enriched in acidic residues; sequence DVVDAEFEEVKDDKK.

This sequence belongs to the heat shock protein 70 family.

In terms of biological role, acts as a chaperone. The polypeptide is Chaperone protein DnaK (Shewanella baltica (strain OS195)).